A 224-amino-acid polypeptide reads, in one-letter code: 7-cyano-7-deazaguanine synthase (224 aa).

12–22 (LSGGLDSSTVT) serves as a coordination point for ATP. 4 residues coordinate Zn(2+): C193, C201, C204, and C207.

This sequence belongs to the QueC family. Zn(2+) is required as a cofactor.

It catalyses the reaction 7-carboxy-7-deazaguanine + NH4(+) + ATP = 7-cyano-7-deazaguanine + ADP + phosphate + H2O + H(+). The protein operates within purine metabolism; 7-cyano-7-deazaguanine biosynthesis. In terms of biological role, catalyzes the ATP-dependent conversion of 7-carboxy-7-deazaguanine (CDG) to 7-cyano-7-deazaguanine (preQ(0)). This Prochlorococcus marinus (strain MIT 9312) protein is 7-cyano-7-deazaguanine synthase.